The sequence spans 212 residues: ATP phosphoribosyltransferase 2 (212 aa).

The protein belongs to the ATP phosphoribosyltransferase family. Short subfamily. Heteromultimer composed of HisG and HisZ subunits.

The protein localises to the cytoplasm. The enzyme catalyses 1-(5-phospho-beta-D-ribosyl)-ATP + diphosphate = 5-phospho-alpha-D-ribose 1-diphosphate + ATP. The protein operates within amino-acid biosynthesis; L-histidine biosynthesis; L-histidine from 5-phospho-alpha-D-ribose 1-diphosphate: step 1/9. Its function is as follows. Catalyzes the condensation of ATP and 5-phosphoribose 1-diphosphate to form N'-(5'-phosphoribosyl)-ATP (PR-ATP). Has a crucial role in the pathway because the rate of histidine biosynthesis seems to be controlled primarily by regulation of HisG enzymatic activity. The polypeptide is ATP phosphoribosyltransferase 2 (hisG2) (Geobacter sulfurreducens (strain ATCC 51573 / DSM 12127 / PCA)).